The following is a 149-amino-acid chain: Nucleoside diphosphate kinase (149 aa).

Positions 9, 57, 85, 91, 102, and 112 each coordinate ATP. His-115 (pros-phosphohistidine intermediate) is an active-site residue.

Belongs to the NDK family. Mg(2+) is required as a cofactor.

It is found in the cytoplasm. The catalysed reaction is a 2'-deoxyribonucleoside 5'-diphosphate + ATP = a 2'-deoxyribonucleoside 5'-triphosphate + ADP. The enzyme catalyses a ribonucleoside 5'-diphosphate + ATP = a ribonucleoside 5'-triphosphate + ADP. Major role in the synthesis of nucleoside triphosphates other than ATP. The ATP gamma phosphate is transferred to the NDP beta phosphate via a ping-pong mechanism, using a phosphorylated active-site intermediate. The protein is Nucleoside diphosphate kinase of Methanospirillum hungatei JF-1 (strain ATCC 27890 / DSM 864 / NBRC 100397 / JF-1).